The primary structure comprises 516 residues: Coiled-coil domain-containing protein 82 (516 aa).

A compositionally biased stretch (basic residues) spans 1 to 13 (MVHARRHETRKNS). The disordered stretch occupies residues 1-265 (MVHARRHETR…DYGDAENEDD (265 aa)). Acidic residues predominate over residues 38–62 (DSDEELDSDEEIGSDEDLDGGESID). Positions 78-96 (IPEKETELNLIKVESERSN) are enriched in basic and acidic residues. A compositionally biased stretch (polar residues) spans 98–107 (KCHMNTSSSS). The span at 113–135 (MNKTKHNDLPDDEAHPGQAEGHH) shows a compositional bias: basic and acidic residues. Phosphoserine is present on residues S170 and S194. T202 carries the phosphothreonine modification. Residues 204–232 (EKSPAARKREYHQKLQELCERSRQKQRHN) are a coiled coil. The segment covering 215 to 226 (HQKLQELCERSR) has biased composition (basic and acidic residues). The span at 248-265 (TDEDEDDDDYGDAENEDD) shows a compositional bias: acidic residues. S301 is subject to Phosphoserine.

The chain is Coiled-coil domain-containing protein 82 (Ccdc82) from Rattus norvegicus (Rat).